Here is a 509-residue protein sequence, read N- to C-terminus: ATP synthase subunit alpha, mitochondrial (509 aa).

171–178 serves as a coordination point for ATP; sequence GDRQTGKT.

It belongs to the ATPase alpha/beta chains family. As to quaternary structure, F-type ATPases have 2 components, CF(1) - the catalytic core - and CF(0) - the membrane proton channel. CF(1) has five subunits: alpha(3), beta(3), gamma(1), delta(1), epsilon(1). CF(0) has three main subunits: a, b and c.

It localises to the mitochondrion. The protein localises to the mitochondrion inner membrane. Mitochondrial membrane ATP synthase (F(1)F(0) ATP synthase or Complex V) produces ATP from ADP in the presence of a proton gradient across the membrane which is generated by electron transport complexes of the respiratory chain. F-type ATPases consist of two structural domains, F(1) - containing the extramembraneous catalytic core, and F(0) - containing the membrane proton channel, linked together by a central stalk and a peripheral stalk. During catalysis, ATP synthesis in the catalytic domain of F(1) is coupled via a rotary mechanism of the central stalk subunits to proton translocation. Subunits alpha and beta form the catalytic core in F(1). Rotation of the central stalk against the surrounding alpha(3)beta(3) subunits leads to hydrolysis of ATP in three separate catalytic sites on the beta subunits. Subunit alpha does not bear the catalytic high-affinity ATP-binding sites. This Triticum aestivum (Wheat) protein is ATP synthase subunit alpha, mitochondrial (ATPA).